We begin with the raw amino-acid sequence, 469 residues long: Ribulose bisphosphate carboxylase large chain (469 aa).

The residue at position 7 (lysine 7) is an N6,N6,N6-trimethyllysine. The substrate site is built by asparagine 116 and threonine 166. The Proton acceptor role is filled by lysine 168. Lysine 170 lines the substrate pocket. Residues lysine 194, aspartate 196, and glutamate 197 each coordinate Mg(2+). An N6-carboxylysine modification is found at lysine 194. Histidine 287 acts as the Proton acceptor in catalysis. 3 residues coordinate substrate: arginine 288, histidine 320, and serine 372.

The protein belongs to the RuBisCO large chain family. Type I subfamily. As to quaternary structure, heterohexadecamer of 8 large chains and 8 small chains; disulfide-linked. The disulfide link is formed within the large subunit homodimers. It depends on Mg(2+) as a cofactor. In terms of processing, the disulfide bond which can form in the large chain dimeric partners within the hexadecamer appears to be associated with oxidative stress and protein turnover.

It localises to the plastid. It is found in the chloroplast. The catalysed reaction is 2 (2R)-3-phosphoglycerate + 2 H(+) = D-ribulose 1,5-bisphosphate + CO2 + H2O. It carries out the reaction D-ribulose 1,5-bisphosphate + O2 = 2-phosphoglycolate + (2R)-3-phosphoglycerate + 2 H(+). In terms of biological role, ruBisCO catalyzes two reactions: the carboxylation of D-ribulose 1,5-bisphosphate, the primary event in carbon dioxide fixation, as well as the oxidative fragmentation of the pentose substrate in the photorespiration process. Both reactions occur simultaneously and in competition at the same active site. This Pachira aquatica (Guiana chestnut) protein is Ribulose bisphosphate carboxylase large chain.